Here is a 358-residue protein sequence, read N- to C-terminus: Peptide chain release factor 1 (358 aa).

Q233 carries the N5-methylglutamine modification.

Belongs to the prokaryotic/mitochondrial release factor family. Post-translationally, methylated by PrmC. Methylation increases the termination efficiency of RF1.

It is found in the cytoplasm. Peptide chain release factor 1 directs the termination of translation in response to the peptide chain termination codons UAG and UAA. The chain is Peptide chain release factor 1 from Clostridium botulinum (strain Okra / Type B1).